A 126-amino-acid polypeptide reads, in one-letter code: Glycine cleavage system H protein (126 aa).

The Lipoyl-binding domain maps to 22–104 (VVFIGITDYA…YGAGWIIKVK (83 aa)). An N6-lipoyllysine modification is found at lysine 63.

Belongs to the GcvH family. In terms of assembly, the glycine cleavage system is composed of four proteins: P, T, L and H. It depends on (R)-lipoate as a cofactor.

Its function is as follows. The glycine cleavage system catalyzes the degradation of glycine. The H protein shuttles the methylamine group of glycine from the P protein to the T protein. This chain is Glycine cleavage system H protein, found in Porphyromonas gingivalis (strain ATCC 33277 / DSM 20709 / CIP 103683 / JCM 12257 / NCTC 11834 / 2561).